Consider the following 514-residue polypeptide: Peptide chain release factor 3 (514 aa).

The tr-type G domain maps to 8–268; it reads KKRRTFAIIS…TFLKFAPEPH (261 aa). GTP contacts are provided by residues 17-24, 85-89, and 139-142; these read SHPDAGKT, DTPGH, and NKLD.

It belongs to the TRAFAC class translation factor GTPase superfamily. Classic translation factor GTPase family. PrfC subfamily.

The protein resides in the cytoplasm. Its function is as follows. Increases the formation of ribosomal termination complexes and stimulates activities of RF-1 and RF-2. It binds guanine nucleotides and has strong preference for UGA stop codons. It may interact directly with the ribosome. The stimulation of RF-1 and RF-2 is significantly reduced by GTP and GDP, but not by GMP. The protein is Peptide chain release factor 3 of Streptococcus gordonii (strain Challis / ATCC 35105 / BCRC 15272 / CH1 / DL1 / V288).